We begin with the raw amino-acid sequence, 271 residues long: Formamidopyrimidine-DNA glycosylase (271 aa).

The active-site Schiff-base intermediate with DNA is the Pro-2. Catalysis depends on Glu-3, which acts as the Proton donor. The Proton donor; for beta-elimination activity role is filled by Lys-57. DNA contacts are provided by His-90, Arg-109, and Arg-151. An FPG-type zinc finger spans residues 236–270; that stretch reads MVYGRAGEACVTCKTKLQEIRQSNRSSVFCPSCQQ. The active-site Proton donor; for delta-elimination activity is the Arg-260.

The protein belongs to the FPG family. As to quaternary structure, monomer. Zn(2+) serves as cofactor.

It catalyses the reaction Hydrolysis of DNA containing ring-opened 7-methylguanine residues, releasing 2,6-diamino-4-hydroxy-5-(N-methyl)formamidopyrimidine.. It carries out the reaction 2'-deoxyribonucleotide-(2'-deoxyribose 5'-phosphate)-2'-deoxyribonucleotide-DNA = a 3'-end 2'-deoxyribonucleotide-(2,3-dehydro-2,3-deoxyribose 5'-phosphate)-DNA + a 5'-end 5'-phospho-2'-deoxyribonucleoside-DNA + H(+). In terms of biological role, involved in base excision repair of DNA damaged by oxidation or by mutagenic agents. Acts as a DNA glycosylase that recognizes and removes damaged bases. Has a preference for oxidized purines, such as 7,8-dihydro-8-oxoguanine (8-oxoG). Has AP (apurinic/apyrimidinic) lyase activity and introduces nicks in the DNA strand. Cleaves the DNA backbone by beta-delta elimination to generate a single-strand break at the site of the removed base with both 3'- and 5'-phosphates. In Colwellia psychrerythraea (strain 34H / ATCC BAA-681) (Vibrio psychroerythus), this protein is Formamidopyrimidine-DNA glycosylase.